The sequence spans 401 residues: Probable tRNA sulfurtransferase (401 aa).

Positions 60-165 (EPISEQLKGV…EQATYITFKD (106 aa)) constitute a THUMP domain. ATP-binding positions include 183-184 (ML), 208-209 (HF), arginine 265, glycine 287, and glutamine 296.

The protein belongs to the ThiI family.

Its subcellular location is the cytoplasm. The catalysed reaction is [ThiI sulfur-carrier protein]-S-sulfanyl-L-cysteine + a uridine in tRNA + 2 reduced [2Fe-2S]-[ferredoxin] + ATP + H(+) = [ThiI sulfur-carrier protein]-L-cysteine + a 4-thiouridine in tRNA + 2 oxidized [2Fe-2S]-[ferredoxin] + AMP + diphosphate. The enzyme catalyses [ThiS sulfur-carrier protein]-C-terminal Gly-Gly-AMP + S-sulfanyl-L-cysteinyl-[cysteine desulfurase] + AH2 = [ThiS sulfur-carrier protein]-C-terminal-Gly-aminoethanethioate + L-cysteinyl-[cysteine desulfurase] + A + AMP + 2 H(+). Its pathway is cofactor biosynthesis; thiamine diphosphate biosynthesis. Functionally, catalyzes the ATP-dependent transfer of a sulfur to tRNA to produce 4-thiouridine in position 8 of tRNAs, which functions as a near-UV photosensor. Also catalyzes the transfer of sulfur to the sulfur carrier protein ThiS, forming ThiS-thiocarboxylate. This is a step in the synthesis of thiazole, in the thiamine biosynthesis pathway. The sulfur is donated as persulfide by IscS. This is Probable tRNA sulfurtransferase from Bacillus pumilus (strain SAFR-032).